Consider the following 441-residue polypeptide: Vacuolar cation/proton exchanger 2 (441 aa).

Topologically, residues 1–69 (MSCCKVPVLI…PKNSVLNSIK (69 aa)) are cytoplasmic. A helical transmembrane segment spans residues 70-90 (IVIFCNKLNLLLPFGPLAILV). The Extracellular segment spans residues 91–97 (HYMIDSK). A helical transmembrane segment spans residues 98–118 (GWVFLLTLVGITPLAERLGYA). The Cytoplasmic portion of the chain corresponds to 119 to 129 (TEQLACYTGPT). Residues 130–150 (VGGLLNATFGNVTELIISIFA) form a helical membrane-spanning segment. The segment at 139–174 (GNVTELIISIFALKNGMIRVVQLTLLGSILSNMLLV) is cation selection. At 151–166 (LKNGMIRVVQLTLLGS) the chain is on the extracellular side. The chain crosses the membrane as a helical span at residues 167–187 (ILSNMLLVLGCAFFCGGLVFY). The Cytoplasmic portion of the chain corresponds to 188–196 (QKDQVFDKG). Residues 197–217 (IATVNSGLLLMAVMGILFPAV) form a helical membrane-spanning segment. Residues 218 to 231 (LHYTHSEVHAGSSE) are Extracellular-facing. Residues 232-252 (LALSRFSSCIMLIAYAAYLFF) form a helical membrane-spanning segment. At 253 to 286 (QLKSQSNSYSPLDEESNQNEETSAEDEDPEISKW) the chain is on the cytoplasmic side. A helical transmembrane segment spans residues 287-307 (EAIIWLSILTAWVSLLSGYLV). At 308 to 311 (DAIE) the chain is on the extracellular side. A helical membrane pass occupies residues 312–332 (GASVSWNIPIAFISTILLPIV). The Cytoplasmic portion of the chain corresponds to 333–354 (GNAAEHAGAIMFAMKDKLDLSL). The interval 333 to 368 (GNAAEHAGAIMFAMKDKLDLSLGVAIGSSIQISMFA) is cation selection. The helical transmembrane segment at 355–375 (GVAIGSSIQISMFAVPFCVVI) threads the bilayer. At 376–384 (GWMMGQQMD) the chain is on the extracellular side. Residues 385–405 (LNFQLFETAMLFITVIVVAFF) traverse the membrane as a helical segment. At 406–412 (LQEGSSN) the chain is on the cytoplasmic side. A helical transmembrane segment spans residues 413 to 433 (YFKGLMLILCYLIVAASFFVH). Topologically, residues 434–441 (EDPHQDGI) are extracellular.

It belongs to the Ca(2+):cation antiporter (CaCA) (TC 2.A.19) family. Cation/proton exchanger (CAX) subfamily.

It localises to the vacuole membrane. Its activity is regulated as follows. Inhibited by excess of Ca(2+) and Cd(2+), Mn(2+), and Zn(2+). Its function is as follows. Vacuolar cation/proton exchanger (CAX). Translocates Ca(2+) and other metal ions into vacuoles using the proton gradient formed by H(+)-ATPase and H(+)-pyrophosphatase. This Arabidopsis thaliana (Mouse-ear cress) protein is Vacuolar cation/proton exchanger 2 (CAX2).